The following is a 417-amino-acid chain: Serine hydroxymethyltransferase (417 aa).

(6S)-5,6,7,8-tetrahydrofolate-binding positions include leucine 121 and 125 to 127; that span reads GHL. N6-(pyridoxal phosphate)lysine is present on lysine 229. 355 to 357 contributes to the (6S)-5,6,7,8-tetrahydrofolate binding site; the sequence is SPF.

The protein belongs to the SHMT family. Homodimer. The cofactor is pyridoxal 5'-phosphate.

The protein localises to the cytoplasm. It carries out the reaction (6R)-5,10-methylene-5,6,7,8-tetrahydrofolate + glycine + H2O = (6S)-5,6,7,8-tetrahydrofolate + L-serine. Its pathway is one-carbon metabolism; tetrahydrofolate interconversion. It functions in the pathway amino-acid biosynthesis; glycine biosynthesis; glycine from L-serine: step 1/1. Functionally, catalyzes the reversible interconversion of serine and glycine with tetrahydrofolate (THF) serving as the one-carbon carrier. This reaction serves as the major source of one-carbon groups required for the biosynthesis of purines, thymidylate, methionine, and other important biomolecules. Also exhibits THF-independent aldolase activity toward beta-hydroxyamino acids, producing glycine and aldehydes, via a retro-aldol mechanism. The protein is Serine hydroxymethyltransferase of Buchnera aphidicola subsp. Baizongia pistaciae (strain Bp).